Consider the following 385-residue polypeptide: Cytochrome b (385 aa).

The next 4 membrane-spanning stretches (helical) occupy residues methionine 32–methionine 52, tyrosine 76–alanine 98, leucine 113–cysteine 133, and phenylalanine 179–methionine 199. Histidine 82 and histidine 96 together coordinate heme b. 2 residues coordinate heme b: histidine 183 and histidine 197. Histidine 202 is a binding site for a ubiquinone. A run of 4 helical transmembrane segments spans residues phenylalanine 225–phenylalanine 245, leucine 289–aspartate 309, leucine 321–alanine 341, and tyrosine 348–proline 368.

This sequence belongs to the cytochrome b family. In terms of assembly, fungal cytochrome b-c1 complex contains 10 subunits; 3 respiratory subunits, 2 core proteins and 5 low-molecular weight proteins. Cytochrome b-c1 complex is a homodimer. The cofactor is heme b.

Its subcellular location is the mitochondrion inner membrane. Its function is as follows. Component of the ubiquinol-cytochrome c reductase complex (complex III or cytochrome b-c1 complex) that is part of the mitochondrial respiratory chain. The b-c1 complex mediates electron transfer from ubiquinol to cytochrome c. Contributes to the generation of a proton gradient across the mitochondrial membrane that is then used for ATP synthesis. This Saccharomyces paradoxus (Yeast) protein is Cytochrome b (COB).